Here is a 1341-residue protein sequence, read N- to C-terminus: Aldehyde oxidase 4 (1341 aa).

The 2Fe-2S ferredoxin-type domain maps to 8 to 95 (DELIFFVNGK…GAAVTTVEGV (88 aa)). Positions 47, 52, 55, and 77 each coordinate [2Fe-2S] cluster. A Mo-molybdopterin-binding site is contributed by Gln116. [2Fe-2S] cluster contacts are provided by Cys117, Cys120, Cys152, and Cys154. Cys154 serves as a coordination point for Mo-molybdopterin. Residues 239-424 (FQGERTTWLA…LSVFIPYSSQ (186 aa)) enclose the FAD-binding PCMH-type domain. Residues 267-274 (LIMGNTTV), Ala348, Thr357, His361, Asp370, and Val414 each bind FAD. Residues Ala805, 805-806 (AF), Leu1046, 1087-1090 (GSMG), Gln1202, and Leu1266 each bind Mo-molybdopterin. Glu1268 serves as the catalytic Proton acceptor; for azaheterocycle hydroxylase activity.

This sequence belongs to the xanthine dehydrogenase family. As to quaternary structure, homodimer. [2Fe-2S] cluster is required as a cofactor. It depends on FAD as a cofactor. Requires Mo-molybdopterin as cofactor. Detected in liver, testis, kidney, brain, Harderian gland and olfactory mucosa.

It localises to the cytoplasm. The catalysed reaction is an aldehyde + O2 + H2O = a carboxylate + H2O2 + H(+). The enzyme catalyses retinal + O2 + H2O = retinoate + H2O2 + H(+). Its function is as follows. Aldehyde oxidase able to catalyze the oxidation of retinaldehyde into retinoate. Acts as a negative modulator of the epidermal trophism. May be able to oxidize a wide variety of aldehydes into their corresponding carboxylates and to hydroxylate azaheterocycles. This is Aldehyde oxidase 4 (AOX4) from Cavia porcellus (Guinea pig).